Reading from the N-terminus, the 141-residue chain is Large ribosomal subunit protein uL11 (141 aa).

This sequence belongs to the universal ribosomal protein uL11 family. As to quaternary structure, part of the ribosomal stalk of the 50S ribosomal subunit. Interacts with L10 and the large rRNA to form the base of the stalk. L10 forms an elongated spine to which L12 dimers bind in a sequential fashion forming a multimeric L10(L12)X complex. Post-translationally, one or more lysine residues are methylated.

Forms part of the ribosomal stalk which helps the ribosome interact with GTP-bound translation factors. The chain is Large ribosomal subunit protein uL11 from Streptococcus suis (strain 98HAH33).